The primary structure comprises 531 residues: Inactive beta-amylase 4, chloroplastic (531 aa).

The N-terminal 62 residues, 1–62 (MTETGVIGCG…KRGRFITKLR (62 aa)), are a transit peptide targeting the chloroplast.

The protein belongs to the glycosyl hydrolase 14 family. Preferentially expressed in vascular tissue of cotyledons, leaves, petioles, stems, petals, siliques and roots, particularly in phloem. Also present in root tip.

It localises to the plastid. The protein localises to the chloroplast. Functionally, no alpha-1,4-glucan hydrolase activity, including beta-amylase, alpha-amylase, a-glucosidase or alpha-amyloglucosidase. However, facilitates or regulates starch breakdown, especially at night, by a mechanism involving direct interaction with starch or other alpha-1,4-glucan. The chain is Inactive beta-amylase 4, chloroplastic (BAM4) from Arabidopsis thaliana (Mouse-ear cress).